An 862-amino-acid polypeptide reads, in one-letter code: Ubiquitin carboxyl-terminal hydrolase 13 (862 aa).

Residues 182–290 (QASKHAKSLV…KHLAHFGIDM (109 aa)) form a UBP-type; degenerate zinc finger. 4 residues coordinate Zn(2+): Cys-206, Cys-209, Cys-226, and His-239. The USP domain occupies 331-860 (TGMKNLGNSC…LGYIYFYHRI (530 aa)). The Nucleophile role is filled by Cys-340. 2 consecutive UBA domains span residues 647–688 (DIDE…IIAH) and 722–762 (QPPE…IFSH). His-822 (proton acceptor) is an active-site residue.

Belongs to the peptidase C19 family.

It carries out the reaction Thiol-dependent hydrolysis of ester, thioester, amide, peptide and isopeptide bonds formed by the C-terminal Gly of ubiquitin (a 76-residue protein attached to proteins as an intracellular targeting signal).. Its activity is regulated as follows. Specifically inhibited by spautin-1 (specific and potent autophagy inhibitor-1), a derivative of MBCQ that binds to USP13 and inhibits deubiquitinase activity. Its function is as follows. Deubiquitinase that mediates deubiquitination of target proteins and is involved in various processes such as autophagy and endoplasmic reticulum-associated degradation (ERAD). In Gallus gallus (Chicken), this protein is Ubiquitin carboxyl-terminal hydrolase 13 (USP13).